The following is a 76-amino-acid chain: ATP synthase subunit 9, mitochondrial (76 aa).

Met1 is subject to N-formylmethionine. 2 helical membrane passes run 14-34 (IATIGLTGAGIGIAIVFAALI) and 52-72 (ILGFALSEATGLFCLMISFLL).

In terms of assembly, F-type ATP synthases have 2 components, the catalytic core F(1) and the membrane-embedded component F(0), linked together by a central stalk and a peripheral stalk. The central stalk, also called rotor shaft, is often seen as part of F(1). The peripheral stalk is seen as part of F(0). F(0) contains the membrane channel next to the rotor. F-type ATP synthases form dimers but each monomer functions independently in ATP generation. The dimer consists of 18 different polypeptides: ATP1 (subunit alpha, part of F(1), 3 molecules per monomer), ATP2 (subunit beta, part of F(1), 3 molecules per monomer), ATP3 (subunit gamma, part of the central stalk), ATP4 (subunit b, part of the peripheral stalk), ATP5/OSCP (subunit 5/OSCP, part of the peripheral stalk), ATP6 (subunit a, part of the peripheral stalk), ATP7 (subunit d, part of the peripheral stalk), ATP8 (subunit 8, part of the peripheral stalk), OLI1 (subunit c, part of the rotor, 10 molecules per monomer), ATP14 (subunit h, part of the peripheral stalk), ATP15 (subunit epsilon, part of the central stalk), ATP16 (subunit delta, part of the central stalk), ATP17 (subunit f, part of the peripheral stalk), ATP18 (subunit i/j, part of the peripheral stalk). Dimer-specific subunits are ATP19 (subunit k, at interface between monomers), ATP20 (subunit g, at interface between monomers), TIM11 (subunit e, at interface between monomers). Also contains subunit L.

The protein resides in the mitochondrion inner membrane. Mitochondrial membrane ATP synthase (F(1)F(0) ATP synthase or Complex V) produces ATP from ADP in the presence of a proton gradient across the membrane which is generated by electron transport complexes of the respiratory chain. F-type ATP synthases consist of two structural domains, F(1) - containing the extramembraneous catalytic core, and F(0) - containing the membrane proton channel, linked together by a central stalk and a peripheral stalk. During catalysis, ATP synthesis in the catalytic domain of F(1) is coupled via a rotary mechanism of the central stalk subunits to proton translocation. Part of the complex F(0) domain. A homomeric c-ring of 10 OLI1/ATP9 subunits is part of the complex rotary element. This chain is ATP synthase subunit 9, mitochondrial, found in Pichia angusta (Yeast).